A 72-amino-acid polypeptide reads, in one-letter code: Translation initiation factor IF-1 (72 aa).

The S1-like domain maps to 1–72 (MAKEESIKMN…SKGRITYRAR (72 aa)).

This sequence belongs to the IF-1 family. As to quaternary structure, component of the 30S ribosomal translation pre-initiation complex which assembles on the 30S ribosome in the order IF-2 and IF-3, IF-1 and N-formylmethionyl-tRNA(fMet); mRNA recruitment can occur at any time during PIC assembly.

It localises to the cytoplasm. In terms of biological role, one of the essential components for the initiation of protein synthesis. Stabilizes the binding of IF-2 and IF-3 on the 30S subunit to which N-formylmethionyl-tRNA(fMet) subsequently binds. Helps modulate mRNA selection, yielding the 30S pre-initiation complex (PIC). Upon addition of the 50S ribosomal subunit IF-1, IF-2 and IF-3 are released leaving the mature 70S translation initiation complex. The polypeptide is Translation initiation factor IF-1 (Alkalilimnicola ehrlichii (strain ATCC BAA-1101 / DSM 17681 / MLHE-1)).